The chain runs to 550 residues: Arginine--tRNA ligase (550 aa).

Positions 130–140 (ANPTGPIHLGG) match the 'HIGH' region motif.

It belongs to the class-I aminoacyl-tRNA synthetase family. As to quaternary structure, monomer.

The protein localises to the cytoplasm. The enzyme catalyses tRNA(Arg) + L-arginine + ATP = L-arginyl-tRNA(Arg) + AMP + diphosphate. The sequence is that of Arginine--tRNA ligase (argS) from Corynebacterium glutamicum (strain ATCC 13032 / DSM 20300 / JCM 1318 / BCRC 11384 / CCUG 27702 / LMG 3730 / NBRC 12168 / NCIMB 10025 / NRRL B-2784 / 534).